Here is a 352-residue protein sequence, read N- to C-terminus: Protein RecA (352 aa).

68 to 75 lines the ATP pocket; sequence GPESSGKT.

Belongs to the RecA family.

Its subcellular location is the cytoplasm. In terms of biological role, can catalyze the hydrolysis of ATP in the presence of single-stranded DNA, the ATP-dependent uptake of single-stranded DNA by duplex DNA, and the ATP-dependent hybridization of homologous single-stranded DNAs. It interacts with LexA causing its activation and leading to its autocatalytic cleavage. The polypeptide is Protein RecA (Clostridium perfringens (strain SM101 / Type A)).